The following is a 262-amino-acid chain: Alpha-tubulin N-acetyltransferase 1 (262 aa).

The N-acetyltransferase domain occupies 1–177 (MQVDADLRPI…TNFVVFEELF (177 aa)). 111–124 (FYVHFSCQRQGVGQ) contacts acetyl-CoA.

The protein belongs to the acetyltransferase ATAT1 family. In terms of tissue distribution, expressed solely in touch receptor neurons.

It carries out the reaction L-lysyl-[alpha-tubulin] + acetyl-CoA = N(6)-acetyl-L-lysyl-[alpha-tubulin] + CoA + H(+). In terms of biological role, specifically acetylates 'Lys-40' in alpha-tubulin/mec-12 on the lumenal side of microtubules. Promotes microtubule destabilization and accelerates microtubule dynamics; this activity may be independent of acetylation activity. Acetylates alpha-tubulin with a slow enzymatic rate, due to a catalytic site that is not optimized for acetyl transfer. Enters the microtubule through each end and diffuses quickly throughout the lumen of microtubules. Acetylates only long/old microtubules because of its slow acetylation rate since it does not have time to act on dynamically unstable microtubules before the enzyme is released. Required for the maintenance of touch receptor neurons and possibly other type of neurons involved in locomotion. Regulates the number and localization of mitochondria in mechanosensory neurons. Plays a role in axonal transport. In Caenorhabditis elegans, this protein is Alpha-tubulin N-acetyltransferase 1.